A 316-amino-acid polypeptide reads, in one-letter code: Lys-63-specific deubiquitinase BRCC36 (316 aa).

Ala-2 carries the post-translational modification N-acetylalanine. In terms of domain architecture, MPN spans 12–179 (VHLESDAFLV…YTCFQSIQAQ (168 aa)). The Zn(2+) site is built by His-122, His-124, and Asp-135. Positions 122-135 (HSHPHITVWPSHVD) match the JAMM motif motif. Ser-258 is modified (phosphoserine).

Belongs to the peptidase M67A family. BRCC36 subfamily. Component of the ARISC complex, at least composed of UIMC1/RAP80, ABRAXAS1, BRCC3/BRCC36, BABAM2 and BABAM1/NBA1. Component of the BRCA1-A complex, at least composed of BRCA1, BARD1, UIMC1/RAP80, ABRAXAS1, BRCC3/BRCC36, babam2 and BABAM1/NBA1. In the BRCA1-A complex, interacts directly with ABRAXAS1 and babam2. Component of the BRISC complex, at least composed of ABRAXAS2, BRCC3/BRCC36, BABAM2 and BABAM1/NBA1. Identified in a complex with SHMT2 and the other subunits of the BRISC complex. In the BRISC complex, interacts directly with ABRAXAS2. Identified in a complex with ABRAXAS2 and NUMA1. The BRISC complex interacts with the CSN complex. Component of the BRCA1/BRCA2 containing complex (BRCC), which also contains BRCA1, BRCA2, BARD1, BABAM2 and RAD51. BRCC is a ubiquitin E3 ligase complex that enhances cellular survival following DNA damage. Interacts with BRCA1. Binds polyubiquitin. Interacts with PWWP2B. Interacts with HDAC1; this interaction is enhanced in the presence of PWWP2B. The cofactor is Zn(2+). Heart, brain, placenta, lung, liver, skeletal muscle, kidney and pancreas. Aberrantly expressed in the vast majority of breast tumors.

The protein localises to the nucleus. Its subcellular location is the cytoplasm. It is found in the cytoskeleton. It localises to the spindle pole. In terms of biological role, metalloprotease that specifically cleaves 'Lys-63'-linked polyubiquitin chains. Does not have activity toward 'Lys-48'-linked polyubiquitin chains. Component of the BRCA1-A complex, a complex that specifically recognizes 'Lys-63'-linked ubiquitinated histones H2A and H2AX at DNA lesions sites, leading to target the BRCA1-BARD1 heterodimer to sites of DNA damage at double-strand breaks (DSBs). In the BRCA1-A complex, it specifically removes 'Lys-63'-linked ubiquitin on histones H2A and H2AX, antagonizing the RNF8-dependent ubiquitination at double-strand breaks (DSBs). Catalytic subunit of the BRISC complex, a multiprotein complex that specifically cleaves 'Lys-63'-linked ubiquitin in various substrates. Mediates the specific 'Lys-63'-specific deubiquitination associated with the COP9 signalosome complex (CSN), via the interaction of the BRISC complex with the CSN complex. The BRISC complex is required for normal mitotic spindle assembly and microtubule attachment to kinetochores via its role in deubiquitinating NUMA1. Plays a role in interferon signaling via its role in the deubiquitination of the interferon receptor IFNAR1; deubiquitination increases IFNAR1 activity by enhancing its stability and cell surface expression. Acts as a regulator of the NLRP3 inflammasome by mediating deubiquitination of NLRP3, leading to NLRP3 inflammasome assembly. Down-regulates the response to bacterial lipopolysaccharide (LPS) via its role in IFNAR1 deubiquitination. Deubiquitinates HDAC1 and PWWP2B leading to their stabilization. This Homo sapiens (Human) protein is Lys-63-specific deubiquitinase BRCC36 (BRCC3).